A 301-amino-acid chain; its full sequence is 4-hydroxy-tetrahydrodipicolinate synthase (301 aa).

Thr-46 is a pyruvate binding site. Tyr-134 acts as the Proton donor/acceptor in catalysis. Lys-162 acts as the Schiff-base intermediate with substrate in catalysis. Ile-203 provides a ligand contact to pyruvate.

This sequence belongs to the DapA family. As to quaternary structure, homotetramer; dimer of dimers.

It localises to the cytoplasm. It catalyses the reaction L-aspartate 4-semialdehyde + pyruvate = (2S,4S)-4-hydroxy-2,3,4,5-tetrahydrodipicolinate + H2O + H(+). It functions in the pathway amino-acid biosynthesis; L-lysine biosynthesis via DAP pathway; (S)-tetrahydrodipicolinate from L-aspartate: step 3/4. Its function is as follows. Catalyzes the condensation of (S)-aspartate-beta-semialdehyde [(S)-ASA] and pyruvate to 4-hydroxy-tetrahydrodipicolinate (HTPA). The polypeptide is 4-hydroxy-tetrahydrodipicolinate synthase (Anaplasma marginale (strain St. Maries)).